Here is a 124-residue protein sequence, read N- to C-terminus: Small ribosomal subunit protein uS12 (124 aa).

Positions 1–28 (MPTIQQLIRSERSKAKKKTKSPALKQCP) are disordered. 3-methylthioaspartic acid is present on D89. The interval 101 to 124 (TLDAQGVKDRKQGRSKYGTKKPKE) is disordered. The span at 113–124 (GRSKYGTKKPKE) shows a compositional bias: basic residues.

This sequence belongs to the universal ribosomal protein uS12 family. Part of the 30S ribosomal subunit. Contacts proteins S8 and S17. May interact with IF1 in the 30S initiation complex.

Its function is as follows. With S4 and S5 plays an important role in translational accuracy. In terms of biological role, interacts with and stabilizes bases of the 16S rRNA that are involved in tRNA selection in the A site and with the mRNA backbone. Located at the interface of the 30S and 50S subunits, it traverses the body of the 30S subunit contacting proteins on the other side and probably holding the rRNA structure together. The combined cluster of proteins S8, S12 and S17 appears to hold together the shoulder and platform of the 30S subunit. The protein is Small ribosomal subunit protein uS12 of Crocosphaera subtropica (strain ATCC 51142 / BH68) (Cyanothece sp. (strain ATCC 51142)).